The chain runs to 31 residues: L-amino-acid oxidase (31 aa).

It belongs to the flavin monoamine oxidase family. FIG1 subfamily. In terms of assembly, homodimer; non-covalently linked. FAD is required as a cofactor. In terms of processing, N-glycosylated. In terms of tissue distribution, expressed by the venom gland.

Its subcellular location is the secreted. It carries out the reaction an L-alpha-amino acid + O2 + H2O = a 2-oxocarboxylate + H2O2 + NH4(+). The catalysed reaction is L-leucine + O2 + H2O = 4-methyl-2-oxopentanoate + H2O2 + NH4(+). It catalyses the reaction L-phenylalanine + O2 + H2O = 3-phenylpyruvate + H2O2 + NH4(+). The enzyme catalyses L-histidine + O2 + H2O = 3-(imidazol-5-yl)pyruvate + H2O2 + NH4(+). Functionally, catalyzes an oxidative deamination of predominantly hydrophobic and aromatic L-amino acids, thus producing hydrogen peroxide that may contribute to the diverse toxic effects of this enzyme. Is moderately active on L-Leu, L-His, and L-Phe, and very weakly active on L-Thr, and L-Cys. Exhibits diverse biological activities, such as hemorrhage, hemolysis, edema, antibacterial and antiparasitic activities, as well as regulation of platelet aggregation. Its effect on platelets is controversial, since it either induces aggregation or inhibits agonist-induced aggregation. These different effects are probably due to different experimental conditions. Inhibits growth of B.subtilis strain ATCC 6633 (MIC=32 uM), E.faecalis strain ATCC 12953 (MIC=32 uM), S.aureus strain ATCC 29213 (MIC=32 uM), S.pyogenes strain ATCC 19615 (MIC=8 uM), E.coli strain ATCC 8739 (MIC=4 uM), K.pneumoniae strain ATCC 13885 (MIC=2 uM), P.mirabilis strain ATCC 25933 (MIC=2 uM), P.aeruginosa strain ATCC 15442 (MIC=8 uM) and S.typhimurium strain ATCC 14028 (MIC=8 uM). The chain is L-amino-acid oxidase from Bothrops mattogrossensis (Pitviper).